Consider the following 949-residue polypeptide: L-fucokinase/L-fucose-1-P guanylyltransferase (949 aa).

The tract at residues 25-191 is fucose-1-phosphate guanylyltransferase; that stretch reads DWFCTSDPVG…DFMLQKPSLA (167 aa). The segment at 559 to 949 is L-fucokinase; sequence LLRDGLLDGI…SDKGFQVSRS (391 aa).

The protein belongs to the GHMP kinase family. As to quaternary structure, homotetramer. Mn(2+) serves as cofactor. The cofactor is Mg(2+).

The enzyme catalyses L-fucose + ATP = beta-L-fucose 1-phosphate + ADP + H(+). It catalyses the reaction beta-L-fucose 1-phosphate + GTP + H(+) = GDP-beta-L-fucose + diphosphate. Bifunctional enzyme involved in the salvage pathway of GDP-fucose synthesis. Catalyzes two successive reactions, the ATP-dependent phosphorylation of L-fucose to L-fucose 1-phosphate, and its guanylylation to GDP-L-fucose. GDP-fucose is an important fucose donor in the process of fucosylated oligosaccharides formation. The polypeptide is L-fucokinase/L-fucose-1-P guanylyltransferase (Bacteroides fragilis).